The following is a 412-amino-acid chain: Tryptophan synthase beta chain (412 aa).

The residue at position 92 (Lys92) is an N6-(pyridoxal phosphate)lysine.

The protein belongs to the TrpB family. Tetramer of two alpha and two beta chains. The cofactor is pyridoxal 5'-phosphate.

The catalysed reaction is (1S,2R)-1-C-(indol-3-yl)glycerol 3-phosphate + L-serine = D-glyceraldehyde 3-phosphate + L-tryptophan + H2O. Its pathway is amino-acid biosynthesis; L-tryptophan biosynthesis; L-tryptophan from chorismate: step 5/5. The beta subunit is responsible for the synthesis of L-tryptophan from indole and L-serine. The polypeptide is Tryptophan synthase beta chain (Methylibium petroleiphilum (strain ATCC BAA-1232 / LMG 22953 / PM1)).